Here is a 513-residue protein sequence, read N- to C-terminus: Serine/threonine-protein kinase UL13 homolog (513 aa).

The disordered stretch occupies residues 1–27 (MDTESKNKKTTNGGENSNCSHSTRTPD). Residues 10-23 (TTNGGENSNCSHST) are compositionally biased toward polar residues. The 343-residue stretch at 145–487 (KEMPIYAGSG…FDSLNIFPYL (343 aa)) folds into the Protein kinase domain. ATP-binding positions include 151–159 (AGSGSYGVV) and Lys-170. The active-site Proton acceptor is Asp-268.

It belongs to the protein kinase superfamily. Ser/Thr protein kinase family. Autophosphorylated.

The protein localises to the virion tegument. Its subcellular location is the host nucleus. It catalyses the reaction L-seryl-[protein] + ATP = O-phospho-L-seryl-[protein] + ADP + H(+). The catalysed reaction is L-threonyl-[protein] + ATP = O-phospho-L-threonyl-[protein] + ADP + H(+). Multifunctional serine/threonine kinase that plays a role in several processes including egress of virus particles from the nucleus, modulation of the actin cytoskeleton and regulation of viral and cellular gene expression. This Gallid herpesvirus 2 (strain Chicken/Md5/ATCC VR-987) (GaHV-2) protein is Serine/threonine-protein kinase UL13 homolog (MDV025).